The primary structure comprises 575 residues: Probable ferredoxin/ferredoxin--NADP reductase (575 aa).

2 consecutive 4Fe-4S ferredoxin-type domains span residues 2 to 29 (PHVI…PTPD) and 37 to 66 (EMLY…PNTR). Cys9, Cys15, Cys19, Cys46, Cys49, Cys52, and Cys56 together coordinate [4Fe-4S] cluster. Positions 115–575 (VAVVGSGPAA…GQPIVLTVPL (461 aa)) are ferredoxin--NADP reductase. 4 residues coordinate FAD: Ala123, Glu143, Leu151, and Ile187. NADP(+) contacts are provided by residues Arg213, 258-261 (NGNV), 302-303 (RR), and Glu314. FAD-binding positions include Trp456 and 463-465 (GFI). Residue Gly463 participates in NADP(+) binding.

The protein in the C-terminal section; belongs to the ferredoxin--NADP reductase family. [4Fe-4S] cluster serves as cofactor. Requires FAD as cofactor.

The enzyme catalyses 2 reduced [2Fe-2S]-[ferredoxin] + NADP(+) + H(+) = 2 oxidized [2Fe-2S]-[ferredoxin] + NADPH. In Mycobacterium bovis (strain ATCC BAA-935 / AF2122/97), this protein is Probable ferredoxin/ferredoxin--NADP reductase (fprB).